We begin with the raw amino-acid sequence, 838 residues long: Protein P (838 aa).

The tract at residues 1–179 (MPLSYQHFRK…FCGSPYSWEQ (179 aa)) is terminal protein domain (TP). Positions 180–341 (ELQHSQRHGD…YCLSHLVNLL (162 aa)) are spacer. The tract at residues 218-242 (LGLQPHQGPLATSQPGRSGSIRPRA) is disordered. The interval 342–685 (EDWGPCVEHG…YLNLYPVARQ (344 aa)) is polymerase/reverse transcriptase domain (RT). The Reverse transcriptase domain occupies 352-595 (EHHIRIPRTP…YSLNFMGYVI (244 aa)). Mg(2+)-binding residues include Asp-424, Asp-546, and Asp-547.

This sequence belongs to the hepadnaviridae P protein family.

The enzyme catalyses DNA(n) + a 2'-deoxyribonucleoside 5'-triphosphate = DNA(n+1) + diphosphate. The catalysed reaction is Endonucleolytic cleavage to 5'-phosphomonoester.. Its activity is regulated as follows. Activated by host HSP70 and HSP40 in vitro to be able to bind the epsilon loop of the pgRNA. Because deletion of the RNase H region renders the protein partly chaperone-independent, the chaperones may be needed indirectly to relieve occlusion of the RNA-binding site by this domain. Inhibited by several reverse-transcriptase inhibitors: Lamivudine, Adefovir and Entecavir. Multifunctional enzyme that converts the viral RNA genome into dsDNA in viral cytoplasmic capsids. This enzyme displays a DNA polymerase activity that can copy either DNA or RNA templates, and a ribonuclease H (RNase H) activity that cleaves the RNA strand of RNA-DNA heteroduplexes in a partially processive 3'- to 5'-endonucleasic mode. Neo-synthesized pregenomic RNA (pgRNA) are encapsidated together with the P protein, and reverse-transcribed inside the nucleocapsid. Initiation of reverse-transcription occurs first by binding the epsilon loop on the pgRNA genome, and is initiated by protein priming, thereby the 5'-end of (-)DNA is covalently linked to P protein. Partial (+)DNA is synthesized from the (-)DNA template and generates the relaxed circular DNA (RC-DNA) genome. After budding and infection, the RC-DNA migrates in the nucleus, and is converted into a plasmid-like covalently closed circular DNA (cccDNA). The activity of P protein does not seem to be necessary for cccDNA generation, and is presumably released from (+)DNA by host nuclear DNA repair machinery. The protein is Protein P of Homo sapiens (Human).